The sequence spans 208 residues: Guanylate kinase (208 aa).

Positions 4–185 (GNLYILSAPS…ALADFQAILR (182 aa)) constitute a Guanylate kinase-like domain. 11-18 (APSGAGKS) lines the ATP pocket.

The protein belongs to the guanylate kinase family.

The protein resides in the cytoplasm. It catalyses the reaction GMP + ATP = GDP + ADP. Functionally, essential for recycling GMP and indirectly, cGMP. The protein is Guanylate kinase (gmk) of Pasteurella multocida (strain Pm70).